The chain runs to 1080 residues: Carbamoyl phosphate synthase large chain (1080 aa).

The tract at residues 1–403 (MPKRTDLRTI…SLQKAVRGLE (403 aa)) is carboxyphosphate synthetic domain. Residues R129, R169, G175, G176, E208, V210, E215, G241, V242, H243, Q285, and E299 each coordinate ATP. The ATP-grasp 1 domain maps to 133-328 (RVAMQEIGLE…IAKIAAKLAV (196 aa)). Residues Q285, E299, and N301 each contribute to the Mg(2+) site. Mn(2+) is bound by residues Q285, E299, and N301. The interval 404 to 554 (TGKVGLEPTG…YSTYEEECEA (151 aa)) is oligomerization domain. Positions 555 to 942 (APSDRRKIMI…AFARAQEAGD (388 aa)) are carbamoyl phosphate synthetic domain. One can recognise an ATP-grasp 2 domain in the interval 679-876 (QKLVQQLGLR…LAKIAARCMT (198 aa)). ATP-binding residues include R715, R754, L756, E761, G787, V788, H789, S790, Q830, and E847. Positions 830, 847, and 849 each coordinate Mg(2+). Mn(2+) contacts are provided by Q830, E847, and N849. The 138-residue stretch at 943-1080 (IRAPQPGRAF…LQELHKELQV (138 aa)) folds into the MGS-like domain. Positions 943–1080 (IRAPQPGRAF…LQELHKELQV (138 aa)) are allosteric domain.

The protein belongs to the CarB family. Composed of two chains; the small (or glutamine) chain promotes the hydrolysis of glutamine to ammonia, which is used by the large (or ammonia) chain to synthesize carbamoyl phosphate. Tetramer of heterodimers (alpha,beta)4. The cofactor is Mg(2+). Requires Mn(2+) as cofactor.

It catalyses the reaction hydrogencarbonate + L-glutamine + 2 ATP + H2O = carbamoyl phosphate + L-glutamate + 2 ADP + phosphate + 2 H(+). The enzyme catalyses hydrogencarbonate + NH4(+) + 2 ATP = carbamoyl phosphate + 2 ADP + phosphate + 2 H(+). It functions in the pathway amino-acid biosynthesis; L-arginine biosynthesis; carbamoyl phosphate from bicarbonate: step 1/1. Its pathway is pyrimidine metabolism; UMP biosynthesis via de novo pathway; (S)-dihydroorotate from bicarbonate: step 1/3. Its function is as follows. Large subunit of the glutamine-dependent carbamoyl phosphate synthetase (CPSase). CPSase catalyzes the formation of carbamoyl phosphate from the ammonia moiety of glutamine, carbonate, and phosphate donated by ATP, constituting the first step of 2 biosynthetic pathways, one leading to arginine and/or urea and the other to pyrimidine nucleotides. The large subunit (synthetase) binds the substrates ammonia (free or transferred from glutamine from the small subunit), hydrogencarbonate and ATP and carries out an ATP-coupled ligase reaction, activating hydrogencarbonate by forming carboxy phosphate which reacts with ammonia to form carbamoyl phosphate. The polypeptide is Carbamoyl phosphate synthase large chain (Xylella fastidiosa (strain 9a5c)).